A 239-amino-acid chain; its full sequence is tRNA (guanine-N(1)-)-methyltransferase (239 aa).

S-adenosyl-L-methionine is bound by residues G110 and 130–135; that span reads VGDYVL.

This sequence belongs to the RNA methyltransferase TrmD family. Homodimer.

The protein localises to the cytoplasm. It catalyses the reaction guanosine(37) in tRNA + S-adenosyl-L-methionine = N(1)-methylguanosine(37) in tRNA + S-adenosyl-L-homocysteine + H(+). Functionally, specifically methylates guanosine-37 in various tRNAs. The polypeptide is tRNA (guanine-N(1)-)-methyltransferase (Borrelia hermsii (strain HS1 / DAH)).